Reading from the N-terminus, the 578-residue chain is Adhesion G protein-coupled receptor A1 (578 aa).

Over 1–22 the chain is Extracellular; sequence MTQWDLKTVLSLPQYPGEFLHP. The chain crosses the membrane as a helical span at residues 23-43; the sequence is VVYACTAVMLLCLLASVITYI. Residues 44–56 lie on the Cytoplasmic side of the membrane; the sequence is LHQSAIRISRKGR. A helical transmembrane segment spans residues 57–77; sequence HALLNFCFHAALTFTVFAGGI. Topologically, residues 78–87 are extracellular; it reads NRTQHPILCQ. Residues 88–108 traverse the membrane as a helical segment; sequence AVGIALHYSTLSTMLWIGVTA. Residues 109-137 are Cytoplasmic-facing; the sequence is RNIYKQVTKKALPCPGADQPPYPKQPLLR. A helical transmembrane segment spans residues 138–158; it reads FYLISGGVPFIICGVTAATNI. Over 159 to 178 the chain is Extracellular; that stretch reads RNYGTEDEDVAYCWMAWEPS. The chain crosses the membrane as a helical span at residues 179–199; it reads LGAFYGPAAFIALVTCVYFLC. Topologically, residues 200 to 262 are cytoplasmic; the sequence is TYVQLRRHPE…NEHSFKAQLR (63 aa). The segment at 216–236 is disordered; that stretch reads ERTEEQQRLAVPESGHRHGVR. Residues 263 to 283 form a helical membrane-spanning segment; sequence AAAFTLFLFTATWTFGALAVS. At 284 to 289 the chain is on the extracellular side; sequence QGHFLD. A helical transmembrane segment spans residues 290–310; sequence MIFSCLYGAFCVTLGLFVLIH. Disordered regions lie at residues 463-486 and 537-578; these read PSSL…EGPM and SLPF…ETTV. A compositionally biased stretch (low complexity) spans 469–481; it reads SPHSSRSESPTSS. A compositionally biased stretch (polar residues) spans 537 to 548; that stretch reads SLPFGGPSQNGL.

The protein belongs to the G-protein coupled receptor 2 family. Adhesion G-protein coupled receptor (ADGR) subfamily. As to expression, predominantly expressed in CNS.

Its subcellular location is the membrane. The sequence is that of Adhesion G protein-coupled receptor A1 from Mus musculus (Mouse).